A 439-amino-acid chain; its full sequence is FAD-linked oxidoreductase phmC (439 aa).

Positions 1–19 (MLSSILLTIFCAFLSSTGA) are cleaved as a signal peptide. Residues asparagine 29 and asparagine 84 are each glycosylated (N-linked (GlcNAc...) asparagine). The FAD-binding PCMH-type domain occupies 89–272 (QGSVPSYYIQ…LSTTTRVEPK (184 aa)). Asparagine 285 and asparagine 300 each carry an N-linked (GlcNAc...) asparagine glycan.

The protein belongs to the oxygen-dependent FAD-linked oxidoreductase family. FAD is required as a cofactor.

It functions in the pathway mycotoxin biosynthesis. FAD-linked oxidoreductase; part of the gene cluster that mediates the biosynthesis of the mycotoxins phomacins, leucine-derived cytochalasans with potent actin polymerization-inhibitory activities and monocot-specific antigerminative activities. The first step in the pathway is catalyzed by the hybrid PKS-NRPS phmA, assisted by the enoyl reductase phmE, that are responsible for fusion of the leucine precursor and the polyketide backbone to produce a 2-pyrrolidone intermediate. The polyketide synthase module (PKS) of phmA is responsible for the synthesis of the polyketide backbone and the downstream nonribosomal peptide synthetase (NRPS) amidates the carboxyl end of the polyketide with the leucine precursor. Because phmA lacks a designated enoylreductase (ER) domain, the required activity is provided the enoyl reductase phmE. Reduction by the hydrolyase phmG, followed by dehydration and intra-molecular Diels-Alder cyclization by the Diels-Alderase phmD then yield the required isoindolone-fused macrocycle. A number of oxidative steps catalyzed by the tailoring cytochrome P450 monooxygenase phmB, the FAD-linked oxidoreductase phmC and the short-chain dehydrogenase/reductase phmF, are further required to afford the final products, phomacin D and phomacin E. The polypeptide is FAD-linked oxidoreductase phmC (Phaeosphaeria nodorum (strain SN15 / ATCC MYA-4574 / FGSC 10173) (Glume blotch fungus)).